Consider the following 525-residue polypeptide: Lymphocyte activation gene 3 protein (525 aa).

Residues Met1–Pro22 form the signal peptide. At Leu23–Leu450 the chain is on the extracellular side. One can recognise an Ig-like V-type domain in the interval Gly37–Gly167. Positions Gly37–Ser252 are interaction with FGL1. Cysteines 44 and 160 form a disulfide. The tract at residues Thr62–Arg97 is disordered. The segment covering Ser69 to Ala87 has biased composition (pro residues). The 85-residue stretch at Gln168–Ser252 folds into the Ig-like C2-type 1 domain. Asn188 carries N-linked (GlcNAc...) asparagine glycosylation. Cys189 and Cys241 are disulfide-bonded. 2 N-linked (GlcNAc...) asparagine glycosylation sites follow: Asn250 and Asn256. Ig-like C2-type domains are found at residues Pro265 to Asn343 and Leu348 to Arg419. Cys282 and Cys333 are joined by a disulfide. Asn343 carries N-linked (GlcNAc...) asparagine glycosylation. Residues Cys369 and Cys412 are joined by a disulfide bond. A connecting peptide region spans residues Glu429–Leu450. A helical membrane pass occupies residues Leu451 to Phe471. The Cytoplasmic segment spans residues His472–Leu525. A disordered region spans residues Glu487–Leu525. The KIEELE motif motif lies at Lys498–Glu503. Residues Glu501 to Gln524 form a 12 X 2 AA tandem repeats of E-X region. The segment covering Leu502–Leu525 has biased composition (acidic residues).

The protein belongs to the LAG3 family. In terms of assembly, interacts with MHC class II (MHC-II); selectively recognizes stable complexes of peptide and MHC-II. Interacts with FGL1 (via the Fibrinogen C-terminal domain). In terms of processing, proteolytically cleaved by ADAM10 and ADAM17 within the connecting peptide region, leading to release of Secreted lymphocyte activation gene 3 protein (sLAG-3). ADAM10 mediates constitutive cleavage, but cleavage increases following T-cell activation, whereas shedding by ADAM17 is induced by TCR signaling in a PRKCQ-dependent manner. As to expression, primarily expressed in activated T-cells and a subset of natural killer (NK) cells.

The protein resides in the cell membrane. It is found in the secreted. Its function is as follows. Lymphocyte activation gene 3 protein: Inhibitory receptor on antigen activated T-cells. Delivers inhibitory signals upon binding to ligands, such as FGL1. FGL1 constitutes a major ligand of LAG3 and is responsible for LAG3 T-cell inhibitory function. Following TCR engagement, LAG3 associates with CD3-TCR in the immunological synapse and directly inhibits T-cell activation. May inhibit antigen-specific T-cell activation in synergy with PDCD1/PD-1, possibly by acting as a coreceptor for PDCD1/PD-1. Negatively regulates the proliferation, activation, effector function and homeostasis of both CD8(+) and CD4(+) T-cells. Also mediates immune tolerance: constitutively expressed on a subset of regulatory T-cells (Tregs) and contributes to their suppressive function. Also acts as a negative regulator of plasmacytoid dendritic cell (pDCs) activation. Binds MHC class II (MHC-II); the precise role of MHC-II-binding is however unclear. In terms of biological role, may function as a ligand for MHC class II (MHC-II) on antigen-presenting cells (APC), promoting APC activation/maturation and driving Th1 immune response. In Homo sapiens (Human), this protein is Lymphocyte activation gene 3 protein.